The sequence spans 149 residues: uncharacterized protein (149 aa).

Residues Met1 to Lys149 form the N-acetyltransferase domain.

This sequence belongs to the acetyltransferase family.

This is an uncharacterized protein from Bacillus subtilis (strain 168).